Consider the following 556-residue polypeptide: Glypican-4 (556 aa).

The first 18 residues, 1–18 (MARFGLPALLCTLAVLSA), serve as a signal peptide directing secretion. A Phosphoserine modification is found at Ser-357. 3 O-linked (Xyl...) (glycosaminoglycan) serine glycosylation sites follow: Ser-494, Ser-498, and Ser-500. N-linked (GlcNAc...) asparagine glycosylation occurs at Asn-514. Ser-529 carries GPI-anchor amidated serine lipidation. A propeptide spans 530-556 (AGVRPGAQAYLLTVFCILFLVMQREWR) (removed in mature form).

This sequence belongs to the glypican family.

It is found in the cell membrane. The protein resides in the secreted. It localises to the extracellular space. Its function is as follows. Cell surface proteoglycan that bears heparan sulfate. May be involved in the development of kidney tubules and of the central nervous system. This chain is Glypican-4 (GPC4), found in Homo sapiens (Human).